We begin with the raw amino-acid sequence, 136 residues long: Large ribosomal subunit protein eL27 (136 aa).

A KOW domain is found at 5–40; that stretch reads MKPGKVVMVLAGRYAGRKAVIVKNIDDGTADRPYSH.

Belongs to the eukaryotic ribosomal protein eL27 family. Component of the large ribosomal subunit.

Its subcellular location is the cytoplasm. It localises to the cytosol. The protein resides in the rough endoplasmic reticulum. Functionally, component of the large ribosomal subunit. The polypeptide is Large ribosomal subunit protein eL27 (rpl27) (Danio rerio (Zebrafish)).